A 230-amino-acid chain; its full sequence is UPF0173 metal-dependent hydrolase TM1040_1920 (230 aa).

The protein belongs to the UPF0173 family.

This chain is UPF0173 metal-dependent hydrolase TM1040_1920, found in Ruegeria sp. (strain TM1040) (Silicibacter sp.).